The primary structure comprises 380 residues: Cytochrome b (380 aa).

Transmembrane regions (helical) follow at residues 33 to 53, 77 to 98, 113 to 133, and 178 to 198; these read FGSL…FLAM, WLIR…YLHV, WNIG…GYVL, and FFAF…IHLL. Positions 83 and 97 each coordinate heme b. Residues His-182 and His-196 each coordinate heme b. His-201 is a binding site for a ubiquinone. 4 consecutive transmembrane segments (helical) span residues 226–246, 288–308, 320–340, and 347–367; these read YKDL…ALFS, LGGV…PMLH, PSQI…WIGG, and FVLI…IALP.

This sequence belongs to the cytochrome b family. The cytochrome bc1 complex contains 3 respiratory subunits (MT-CYB, CYC1 and UQCRFS1), 2 core proteins (UQCRC1 and UQCRC2) and probably 6 low-molecular weight proteins. Heme b is required as a cofactor.

It localises to the mitochondrion inner membrane. Its function is as follows. Component of the ubiquinol-cytochrome c reductase complex (complex III or cytochrome b-c1 complex) that is part of the mitochondrial respiratory chain. The b-c1 complex mediates electron transfer from ubiquinol to cytochrome c. Contributes to the generation of a proton gradient across the mitochondrial membrane that is then used for ATP synthesis. The chain is Cytochrome b (mt-cyb) from Acipenser sinensis (Chinese sturgeon).